The following is a 427-amino-acid chain: MPALVLLGAQWGDEGKGKATDLLGGSVDYVVRYQGGNNAGHTVVVGDQKYALHLLPSGILSPGCTPVIGNGVVVDPSVLFSELSGLNERGVDTSKLLISGNAHIITPYNVTVDKVTERFLGKRKIGTTGRGIGPTYADKINRVGIRVQDLYDESILTQKVEAALDVKNQMLTKLYNRRAIATGQVVEELLGYADKLAPYVADTVLVLNQALDDDKVVLFEGGQGTLLDIDHGTYPFVTSSNPTAGGACTGAGVGPTKISRVIGILKAYTTRVGAGPFPTELFDEDGEALRRIGGERGVTTGRDRRCGWFDAVIARYATRVNGLTDFFLTKLDVLTGWEQIPVCVAYEIDGKRVEELPYSQSDFHHAKPVYETLPGWSEDITKAKSFSDLPKNAQAYVKALEEMSGAPISAIGVGPGRDETIEINSFL.

GTP-binding positions include 12–18 (GDEGKGK) and 40–42 (GHT). Asp13 serves as the catalytic Proton acceptor. Positions 13 and 40 each coordinate Mg(2+). Residues 13-16 (DEGK), 38-41 (NAGH), Thr128, Arg142, Gln223, Thr238, and Arg302 each bind IMP. The Proton donor role is filled by His41. 298-304 (VTTGRDR) is a binding site for substrate. Residues Arg304, 330 to 332 (KLD), and 412 to 414 (GVG) contribute to the GTP site.

This sequence belongs to the adenylosuccinate synthetase family. As to quaternary structure, homodimer. The cofactor is Mg(2+).

It localises to the cytoplasm. The enzyme catalyses IMP + L-aspartate + GTP = N(6)-(1,2-dicarboxyethyl)-AMP + GDP + phosphate + 2 H(+). It functions in the pathway purine metabolism; AMP biosynthesis via de novo pathway; AMP from IMP: step 1/2. Functionally, plays an important role in the de novo pathway of purine nucleotide biosynthesis. Catalyzes the first committed step in the biosynthesis of AMP from IMP. The protein is Adenylosuccinate synthetase of Streptomyces coelicolor (strain ATCC BAA-471 / A3(2) / M145).